Reading from the N-terminus, the 662-residue chain is Transketolase (662 aa).

Histidine 28 is a substrate binding site. Thiamine diphosphate contacts are provided by residues histidine 68 and 115-117 (GPL). Aspartate 156 lines the Mg(2+) pocket. Residues glycine 157 and asparagine 186 each coordinate thiamine diphosphate. 2 residues coordinate Mg(2+): asparagine 186 and isoleucine 188. Substrate contacts are provided by histidine 261, arginine 356, and serine 383. Histidine 261 is a binding site for thiamine diphosphate. Residue glutamate 410 is the Proton donor of the active site. Phenylalanine 436 serves as a coordination point for thiamine diphosphate. Substrate contacts are provided by histidine 460, aspartate 468, and arginine 519.

This sequence belongs to the transketolase family. In terms of assembly, homodimer. Mg(2+) is required as a cofactor. Requires Ca(2+) as cofactor. Mn(2+) serves as cofactor. The cofactor is Co(2+). It depends on thiamine diphosphate as a cofactor.

The catalysed reaction is D-sedoheptulose 7-phosphate + D-glyceraldehyde 3-phosphate = aldehydo-D-ribose 5-phosphate + D-xylulose 5-phosphate. Its pathway is carbohydrate biosynthesis; Calvin cycle. It functions in the pathway carbohydrate degradation; pentose phosphate pathway. In terms of biological role, catalyzes the transfer of a two-carbon ketol group from a ketose donor to an aldose acceptor, via a covalent intermediate with the cofactor thiamine pyrophosphate. In Staphylococcus epidermidis (strain ATCC 35984 / DSM 28319 / BCRC 17069 / CCUG 31568 / BM 3577 / RP62A), this protein is Transketolase (tkt).